The sequence spans 578 residues: Protein RIK (578 aa).

Residues 1 to 34 (MTEDNDEARVPLSDSSTTNDASRTRQRRKRKWDK) are disordered. Residues 206–273 (SSNVAARIRG…KSIDDAKRLA (68 aa)) enclose the KH domain. Over residues 413–425 (ATSLSIPSDNASN) the composition is skewed to polar residues. Residues 413-578 (ATSLSIPSDN…DPDEPLTTRS (166 aa)) form a disordered region. A compositionally biased stretch (pro residues) spans 472 to 492 (PPSPRSVMPPPPPKTIAPPPS). Composition is skewed to low complexity over residues 493 to 503 (KTMSPPSSKSM) and 510 to 521 (SKTMSPLSSKSM). Positions 560–572 (YGDDEDDDDDPDE) are enriched in acidic residues.

In terms of assembly, interacts with AS1. Expressed in vegetative tissues.

The protein localises to the nucleus. The chain is Protein RIK (RIK) from Arabidopsis thaliana (Mouse-ear cress).